A 55-amino-acid chain; its full sequence is ATP synthase small subunit 6-A, mitochondrial (55 aa).

The N-terminal 11 residues, 1–11 (MRLFDPWPVFF), are a transit peptide targeting the mitochondrion. A helical transmembrane segment spans residues 21–39 (FLTGFAVTGVLITKLTAGL).

Belongs to the ATPase 6 subunit family.

It is found in the mitochondrion inner membrane. Mitochondrial membrane ATP synthase (F(1)F(0) ATP synthase or Complex V) produces ATP from ADP in the presence of a proton gradient across the membrane which is generated by electron transport complexes of the respiratory chain. F-type ATPases consist of two structural domains, F(1) - containing the extramembraneous catalytic core and F(0) - containing the membrane proton channel, linked together by a central stalk and a peripheral stalk. During catalysis, ATP synthesis in the catalytic domain of F(1) is coupled via a rotary mechanism of the central stalk subunits to proton translocation. Part of the complex F(0) domain. Confers tolerance to several abiotic stresses (e.g. salt, mannitol, drought, oxidative and cold stresses), probably by providing additional energy needed for cell homeostasis. This is ATP synthase small subunit 6-A, mitochondrial from Arabidopsis thaliana (Mouse-ear cress).